A 93-amino-acid chain; its full sequence is Large ribosomal subunit protein uL23 (93 aa).

This sequence belongs to the universal ribosomal protein uL23 family. Part of the 50S ribosomal subunit. Contacts protein L29, and trigger factor when it is bound to the ribosome.

In terms of biological role, one of the early assembly proteins it binds 23S rRNA. One of the proteins that surrounds the polypeptide exit tunnel on the outside of the ribosome. Forms the main docking site for trigger factor binding to the ribosome. The protein is Large ribosomal subunit protein uL23 of Nautilia profundicola (strain ATCC BAA-1463 / DSM 18972 / AmH).